The sequence spans 127 residues: Small ribosomal subunit protein uS11 (127 aa).

It belongs to the universal ribosomal protein uS11 family. As to quaternary structure, part of the 30S ribosomal subunit. Interacts with proteins S7 and S18. Binds to IF-3.

Its function is as follows. Located on the platform of the 30S subunit, it bridges several disparate RNA helices of the 16S rRNA. Forms part of the Shine-Dalgarno cleft in the 70S ribosome. In Rickettsia felis (strain ATCC VR-1525 / URRWXCal2) (Rickettsia azadi), this protein is Small ribosomal subunit protein uS11.